A 214-amino-acid chain; its full sequence is Probable septum site-determining protein MinC (214 aa).

It belongs to the MinC family. In terms of assembly, interacts with MinD and FtsZ.

Functionally, cell division inhibitor that blocks the formation of polar Z ring septums. Rapidly oscillates between the poles of the cell to destabilize FtsZ filaments that have formed before they mature into polar Z rings. Prevents FtsZ polymerization. The polypeptide is Probable septum site-determining protein MinC (Thermoanaerobacter pseudethanolicus (strain ATCC 33223 / 39E) (Clostridium thermohydrosulfuricum)).